A 149-amino-acid polypeptide reads, in one-letter code: Pleckstrin homology domain-containing family J member 1 (149 aa).

The 94-residue stretch at 15 to 108 (PAEMAAELGM…WMAALRQASY (94 aa)) folds into the PH domain.

The protein is Pleckstrin homology domain-containing family J member 1 (PLEKHJ1) of Bos taurus (Bovine).